Here is a 37-residue protein sequence, read N- to C-terminus: Large ribosomal subunit protein bL36 (37 aa).

Belongs to the bacterial ribosomal protein bL36 family.

This chain is Large ribosomal subunit protein bL36 (rpmJ), found in Mycobacterium tuberculosis (strain ATCC 25618 / H37Rv).